We begin with the raw amino-acid sequence, 284 residues long: Proteasome subunit beta 1 (284 aa).

Positions 1-54 are cleaved as a propeptide — removed in mature form; by autocatalysis; it reads MAQRDTGGRLGAEFFTPGDSSFTAFLAAHRPALLSTRGLLPDGVRAAPDRVPHG. The active-site Nucleophile is the threonine 55. A compositionally biased stretch (basic and acidic residues) spans 256–277; the sequence is RLPESETEDLSREMVEQRHTRP. The interval 256-284 is disordered; the sequence is RLPESETEDLSREMVEQRHTRPDGPTAAM.

Belongs to the peptidase T1B family. The 20S proteasome core is composed of 14 alpha and 14 beta subunits that assemble into four stacked heptameric rings, resulting in a barrel-shaped structure. The two inner rings, each composed of seven catalytic beta subunits, are sandwiched by two outer rings, each composed of seven alpha subunits. The catalytic chamber with the active sites is on the inside of the barrel. Has a gated structure, the ends of the cylinder being occluded by the N-termini of the alpha-subunits. Is capped by the proteasome-associated ATPase, ARC.

The protein localises to the cytoplasm. It carries out the reaction Cleavage of peptide bonds with very broad specificity.. It functions in the pathway protein degradation; proteasomal Pup-dependent pathway. The formation of the proteasomal ATPase ARC-20S proteasome complex, likely via the docking of the C-termini of ARC into the intersubunit pockets in the alpha-rings, may trigger opening of the gate for substrate entry. Interconversion between the open-gate and close-gate conformations leads to a dynamic regulation of the 20S proteasome proteolysis activity. Functionally, component of the proteasome core, a large protease complex with broad specificity involved in protein degradation. The chain is Proteasome subunit beta 1 from Streptomyces avermitilis (strain ATCC 31267 / DSM 46492 / JCM 5070 / NBRC 14893 / NCIMB 12804 / NRRL 8165 / MA-4680).